Reading from the N-terminus, the 367-residue chain is Aminomethyltransferase (367 aa).

This sequence belongs to the GcvT family. In terms of assembly, the glycine cleavage system is composed of four proteins: P, T, L and H.

It carries out the reaction N(6)-[(R)-S(8)-aminomethyldihydrolipoyl]-L-lysyl-[protein] + (6S)-5,6,7,8-tetrahydrofolate = N(6)-[(R)-dihydrolipoyl]-L-lysyl-[protein] + (6R)-5,10-methylene-5,6,7,8-tetrahydrofolate + NH4(+). In terms of biological role, the glycine cleavage system catalyzes the degradation of glycine. The polypeptide is Aminomethyltransferase (Mycobacterium bovis (strain ATCC BAA-935 / AF2122/97)).